The primary structure comprises 483 residues: ATP synthase subunit beta (483 aa).

169 to 176 (GGAGVGKT) is an ATP binding site.

This sequence belongs to the ATPase alpha/beta chains family. In terms of assembly, F-type ATPases have 2 components, CF(1) - the catalytic core - and CF(0) - the membrane proton channel. CF(1) has five subunits: alpha(3), beta(3), gamma(1), delta(1), epsilon(1). CF(0) has three main subunits: a(1), b(2) and c(9-12). The alpha and beta chains form an alternating ring which encloses part of the gamma chain. CF(1) is attached to CF(0) by a central stalk formed by the gamma and epsilon chains, while a peripheral stalk is formed by the delta and b chains.

The protein localises to the cell membrane. It catalyses the reaction ATP + H2O + 4 H(+)(in) = ADP + phosphate + 5 H(+)(out). Produces ATP from ADP in the presence of a proton gradient across the membrane. The catalytic sites are hosted primarily by the beta subunits. The protein is ATP synthase subunit beta of Rhodococcus jostii (strain RHA1).